A 562-amino-acid chain; its full sequence is Long-chain-fatty-acid--CoA ligase (562 aa).

Residue 213-224 participates in ATP binding; the sequence is YTGGTTGVAKGA.

This sequence belongs to the ATP-dependent AMP-binding enzyme family. It depends on Mg(2+) as a cofactor.

The protein resides in the membrane. The enzyme catalyses a long-chain fatty acid + ATP + CoA = a long-chain fatty acyl-CoA + AMP + diphosphate. It participates in lipid metabolism; fatty acid beta-oxidation. In terms of biological role, catalyzes the esterification, concomitant with transport, of exogenous long-chain fatty acids into metabolically active CoA thioesters for subsequent degradation or incorporation into phospholipids. This is Long-chain-fatty-acid--CoA ligase (fadD) from Yersinia pestis.